The primary structure comprises 182 residues: UPF0316 protein BCQ_3166 (182 aa).

3 consecutive transmembrane segments (helical) span residues 6–26, 32–52, and 58–78; these read LIFV…ILLV, SAAA…GIVF, and WMNI…GGYI.

This sequence belongs to the UPF0316 family.

The protein localises to the cell membrane. In Bacillus cereus (strain Q1), this protein is UPF0316 protein BCQ_3166.